The sequence spans 565 residues: Periplasmic trehalase (565 aa).

The first 30 residues, 1–30 (MKSPAPSRPQKMALIPACIFLCFAALSVQA), serve as a signal peptide directing secretion. Substrate is bound by residues Arg-152, 159–160 (WD), Asn-196, 205–207 (RSQ), 277–279 (RPE), and Gly-310. Residues Asp-312 and Glu-496 each act as proton donor/acceptor in the active site. Glu-511 provides a ligand contact to substrate. Residues 538–565 (PCDNVPATRPTVKSATTQPSTKEAQPTP) form a disordered region. Over residues 548–565 (TVKSATTQPSTKEAQPTP) the composition is skewed to polar residues.

This sequence belongs to the glycosyl hydrolase 37 family. As to quaternary structure, monomer.

The protein localises to the periplasm. It carries out the reaction alpha,alpha-trehalose + H2O = alpha-D-glucose + beta-D-glucose. Its function is as follows. Provides the cells with the ability to utilize trehalose at high osmolarity by splitting it into glucose molecules that can subsequently be taken up by the phosphotransferase-mediated uptake system. This Escherichia coli (strain 55989 / EAEC) protein is Periplasmic trehalase.